Reading from the N-terminus, the 523-residue chain is MFS-type transporter R5 (523 aa).

A disordered region spans residues Q19–E42. Positions N21–S38 are enriched in polar residues. N-linked (GlcNAc...) asparagine glycosylation is found at N35, N94, and N143. The next 2 helical transmembrane spans lie at A183–L203 and A211–F231. N-linked (GlcNAc...) asparagine glycans are attached at residues N235 and N250. Transmembrane regions (helical) follow at residues F291 to F311, Y319 to L339, L381 to L401, V408 to A428, A443 to V463, and I470 to L490.

This sequence belongs to the major facilitator superfamily.

The protein resides in the membrane. Functionally, MFS-type transporter; part of the gene cluster that mediates the biosynthesis of squalestatin S1 (SQS1, also known as zaragozic acid A), a heavily oxidized fungal polyketide that offers potent cholesterol lowering activity by targeting squalene synthase (SS). This is MFS-type transporter R5 from Phoma sp. (strain ATCC 20986 / MF5453).